Reading from the N-terminus, the 88-residue chain is Small ribosomal subunit protein bS20 (88 aa).

A compositionally biased stretch (basic residues) spans 1 to 22 (MANIKSSKKRSIQSEKKRKYNS). The tract at residues 1–26 (MANIKSSKKRSIQSEKKRKYNSSKKS) is disordered.

Belongs to the bacterial ribosomal protein bS20 family.

Binds directly to 16S ribosomal RNA. This is Small ribosomal subunit protein bS20 from Wigglesworthia glossinidia brevipalpis.